A 138-amino-acid chain; its full sequence is Urease subunit beta (138 aa).

The segment at 115 to 138 (RMRAAGFGDTGEAAPDDGDTESDQ) is disordered. Acidic residues predominate over residues 128 to 138 (APDDGDTESDQ).

This sequence belongs to the urease beta subunit family. Heterotrimer of UreA (gamma), UreB (beta) and UreC (alpha) subunits. Three heterotrimers associate to form the active enzyme.

The protein localises to the cytoplasm. It carries out the reaction urea + 2 H2O + H(+) = hydrogencarbonate + 2 NH4(+). It functions in the pathway nitrogen metabolism; urea degradation; CO(2) and NH(3) from urea (urease route): step 1/1. The sequence is that of Urease subunit beta from Haloarcula marismortui (strain ATCC 43049 / DSM 3752 / JCM 8966 / VKM B-1809) (Halobacterium marismortui).